Reading from the N-terminus, the 329-residue chain is Intradiol ring-cleavage dioxygenase hqdA (329 aa).

4 residues coordinate Fe cation: Tyr167, Tyr201, His225, and His227.

The protein belongs to the intradiol ring-cleavage dioxygenase family. Homodimer. Requires Fe(3+) as cofactor.

The catalysed reaction is catechol + O2 = cis,cis-muconate + 2 H(+). The enzyme catalyses benzene-1,2,4-triol + O2 = maleylacetate + 2 H(+). Its function is as follows. Intradiol ring-cleavage dioxygenase involved in an alternative pathway to the protocatechuic acid pathway since it is active on hydroxyquinol and catechol but not on protocatechuic acid. The sequence is that of Intradiol ring-cleavage dioxygenase hqdA from Aspergillus niger (strain ATCC MYA-4892 / CBS 513.88 / FGSC A1513).